The sequence spans 440 residues: GFKAGVKDYKLTYYTPEYETKDTDILAAFRVTPQPGVPPEEAGAAVAAESSTGTWTTVWTDGLTSLDRYKGRCYHIEPVVGEENQYIAYVAYPLDLFEEGSVTNMFTSIVGNVFGFKALRALRLEDLRIPTTYSKTFLGPPHGIQVERDKLNKYGRPFLGCTIKPKLGLSAKNYGRACYECLRGGLDFTKDDENVNSQPFXRWRDRXVFCAEAXYKAQAETGEIKGHYLNATAGTCEEMIKRAVFARELGAPIVMHDYLTGGFTANTSLAHYCRDNGLLLHIHRAMHAVIDRQKNHGMHFRVLAKALRMSGGDHIHAGTVVGKLEGEREMTLGFVDLLRDDFIEKDRARGIFFTQDWVSMPGVIPVASGGIHVWHMPALTEIFGDDSVLQFGGGTLGHPWXNAPGAAANRVALEACVQARNEGRDLAREGNEIIRAACKW.

K3 carries the N6,N6,N6-trimethyllysine modification. Substrate contacts are provided by N112 and T162. K164 functions as the Proton acceptor in the catalytic mechanism. A substrate-binding site is contributed by K166. K190, D192, and E193 together coordinate Mg(2+). Residue K190 is modified to N6-carboxylysine. The active-site Proton acceptor is H283. Substrate-binding residues include R284, H316, and S368.

This sequence belongs to the RuBisCO large chain family. Type I subfamily. As to quaternary structure, heterohexadecamer of 8 large chains and 8 small chains; disulfide-linked. The disulfide link is formed within the large subunit homodimers. Mg(2+) serves as cofactor. The disulfide bond which can form in the large chain dimeric partners within the hexadecamer appears to be associated with oxidative stress and protein turnover.

The protein resides in the plastid. Its subcellular location is the chloroplast. The enzyme catalyses 2 (2R)-3-phosphoglycerate + 2 H(+) = D-ribulose 1,5-bisphosphate + CO2 + H2O. It carries out the reaction D-ribulose 1,5-bisphosphate + O2 = 2-phosphoglycolate + (2R)-3-phosphoglycerate + 2 H(+). Functionally, ruBisCO catalyzes two reactions: the carboxylation of D-ribulose 1,5-bisphosphate, the primary event in carbon dioxide fixation, as well as the oxidative fragmentation of the pentose substrate in the photorespiration process. Both reactions occur simultaneously and in competition at the same active site. This Bambusa multiplex (Hedge bamboo) protein is Ribulose bisphosphate carboxylase large chain.